Consider the following 282-residue polypeptide: Probable septum site-determining protein MinC (282 aa).

Residues 108–127 form a disordered region; sequence AAARSADEESANAAAAAPAA. Low complexity predominate over residues 118-127; it reads ANAAAAAPAA.

The protein belongs to the MinC family. In terms of assembly, interacts with MinD and FtsZ.

Functionally, cell division inhibitor that blocks the formation of polar Z ring septums. Rapidly oscillates between the poles of the cell to destabilize FtsZ filaments that have formed before they mature into polar Z rings. Prevents FtsZ polymerization. The protein is Probable septum site-determining protein MinC of Paraburkholderia xenovorans (strain LB400).